A 134-amino-acid polypeptide reads, in one-letter code: Small ribosomal subunit protein uS8c (134 aa).

The protein belongs to the universal ribosomal protein uS8 family. Part of the 30S ribosomal subunit.

The protein localises to the plastid. In terms of biological role, one of the primary rRNA binding proteins, it binds directly to 16S rRNA central domain where it helps coordinate assembly of the platform of the 30S subunit. This chain is Small ribosomal subunit protein uS8c (rps8), found in Cuscuta gronovii (Common dodder).